The primary structure comprises 992 residues: Leucine-rich repeat receptor-like serine/threonine-protein kinase BAM3 (992 aa).

A signal peptide spans 1–21; the sequence is MADKIFTFFLILSSISPLLCS. Topologically, residues 22–656 are extracellular; sequence SLISPLNLSL…ARSRGEISAK (635 aa). Asn-28 is a glycosylation site (N-linked (GlcNAc...) asparagine). The cysteines at positions 64 and 71 are disulfide-linked. N-linked (GlcNAc...) asparagine glycosylation is found at Asn-75 and Asn-87. 6 LRR repeats span residues 75–99, 100–124, 126–148, 150–173, 174–199, and 201–221; these read NQSI…ISRL, SPSL…IYEL, GLEV…GFSQ, TQLV…LTTL, TRLE…SFLS, and KFLS…LANI. 2 N-linked (GlcNAc...) asparagine glycosylation sites follow: Asn-131 and Asn-163. The N-linked (GlcNAc...) asparagine glycan is linked to Asn-220. The CLE45 peptide binding motif lies at 226-231; sequence QLYLGY. LRR repeat units follow at residues 246 to 270, 271 to 294, 296 to 320, 322 to 342, 343 to 366, 368 to 391, 393 to 414, 415 to 438, 439 to 462, 465 to 489, 491 to 513, 514 to 536, 537 to 561, 563 to 585, and 586 to 610; these read LINL…LGNL, KNLE…LGNM, SLKT…GLQK, QLFN…VSEL, PDLQ…LGSN, NLIE…CFGR, LKIL…LGQC, EPLW…LIYL, PNLS…EAGN, FSSL…IRNL, SLQI…IGSL, KSLL…EFGD, CMSL…ISQI, ILNY…LGYM, and KSLT…QFSY. Residues Asn-256 and Asn-293 are each glycosylated (N-linked (GlcNAc...) asparagine). Residue Asn-354 is glycosylated (N-linked (GlcNAc...) asparagine). Asn-440 and Asn-472 each carry an N-linked (GlcNAc...) asparagine glycan. N-linked (GlcNAc...) asparagine glycosylation is present at Asn-525. 6 N-linked (GlcNAc...) asparagine glycosylation sites follow: Asn-568, Asn-575, Asn-597, Asn-613, Asn-631, and Asn-635. The chain crosses the membrane as a helical span at residues 657-677; that stretch reads FKLFFGLGLLGFFLVFVVLAV. The Cytoplasmic segment spans residues 678–992; sequence VKNRRMRKNN…ISQAKQPNTF (315 aa). Residues 710–992 form the Protein kinase domain; that stretch reads VKENHVIGKG…ISQAKQPNTF (283 aa). Residues 716–724 and Lys-738 contribute to the ATP site; that span reads IGKGGRGIV. Asp-836 serves as the catalytic Proton acceptor.

The protein belongs to the protein kinase superfamily. Ser/Thr protein kinase family. As to quaternary structure, interacts with CLE45, especially in roots. Binds to the dimer CLV2/CRN. Expressed in seedlings, roots, leaves, stems, inflorescences, flowers and siliques. In roots, confined to protophloem and sieve element precursor cells.

Its subcellular location is the cell membrane. It is found in the endoplasmic reticulum membrane. It catalyses the reaction L-seryl-[protein] + ATP = O-phospho-L-seryl-[protein] + ADP + H(+). It carries out the reaction L-threonyl-[protein] + ATP = O-phospho-L-threonyl-[protein] + ADP + H(+). Its function is as follows. Necessary for male gametophyte development, as well as ovule specification and function. Required for the development of high-ordered vascular strands within the leaf and a correlated control of leaf shape, size and symmetry. LRR-rich receptor-like kinase (LRR-RLK) involved in the perception of CLE45 peptide ligand which mediates root growth inhibition by repressing protophloem differentiation; this mechanism requires CRN. BRX, BAM3, and CLE45 act together to regulate the transition of protophloem cells from proliferation to differentiation, thus impinging on postembryonic growth capacity of the root meristem. Necessary for CLE45 peptide-triggered accumulation of MAKR5 in developing sieve elements. This Arabidopsis thaliana (Mouse-ear cress) protein is Leucine-rich repeat receptor-like serine/threonine-protein kinase BAM3.